The primary structure comprises 504 residues: Cytochrome P450 3A41 (504 aa).

Residue Cys443 participates in heme binding.

It belongs to the cytochrome P450 family. Heme is required as a cofactor. Expressed in liver. Also expressed in the kidneys of female mice, with traces in the stomach, ovary, and heart of female mice and in the testis of male mice.

Its subcellular location is the endoplasmic reticulum membrane. The protein resides in the microsome membrane. The catalysed reaction is an organic molecule + reduced [NADPH--hemoprotein reductase] + O2 = an alcohol + oxidized [NADPH--hemoprotein reductase] + H2O + H(+). The chain is Cytochrome P450 3A41 (Cyp3a41a) from Mus musculus (Mouse).